The following is a 715-amino-acid chain: 1,4-alpha-glucan branching enzyme GlgB (715 aa).

Aspartate 396 acts as the Nucleophile in catalysis. The active-site Proton donor is the glutamate 449.

This sequence belongs to the glycosyl hydrolase 13 family. GlgB subfamily. Monomer.

The catalysed reaction is Transfers a segment of a (1-&gt;4)-alpha-D-glucan chain to a primary hydroxy group in a similar glucan chain.. It functions in the pathway glycan biosynthesis; glycogen biosynthesis. Its function is as follows. Catalyzes the formation of the alpha-1,6-glucosidic linkages in glycogen by scission of a 1,4-alpha-linked oligosaccharide from growing alpha-1,4-glucan chains and the subsequent attachment of the oligosaccharide to the alpha-1,6 position. This Vibrio vulnificus (strain CMCP6) protein is 1,4-alpha-glucan branching enzyme GlgB.